The primary structure comprises 988 residues: Voltage-gated delayed rectifier potassium channel KCNH5 (988 aa).

The Cytoplasmic portion of the chain corresponds to 1-217 (MPGGKRGLVA…LHYCAFKTTW (217 aa)). The PAS domain occupies 12 to 90 (QNTFLENIVR…VRQTFDNYES (79 aa)). In terms of domain architecture, PAC spans 91–143 (NCFEVLLYKKNRTPVWFYMQIAPIRNEHEKVVLFLCTFKDITLFKQPIEDDST). A helical membrane pass occupies residues 218 to 238 (DWVILILTFYTAIMVPYNVSF). Residues 239-243 (KTKQN) lie on the Extracellular side of the membrane. A helical transmembrane segment spans residues 244 to 264 (NIAWLVLDSVVDVIFLVDIVL). At 265 to 291 (NFHTTFVGPGGEVISDPKLIRMNYLKT) the chain is on the cytoplasmic side. The helical transmembrane segment at 292 to 312 (WFVIDLLSCLPYDIINAFENV) threads the bilayer. At 313 to 319 (DEGISSL) the chain is on the extracellular side. The chain crosses the membrane as a helical; Voltage-sensor span at residues 320–340 (FSSLKVVRLLRLGRVARKLDH). The Cytoplasmic segment spans residues 341–346 (YLEYGA). The chain crosses the membrane as a helical span at residues 347–367 (AVLVLLVCVFGLVAHWLACIW). Over 368 to 419 (YSIGDYEVIDEVTNTIQIDSWLYQLALSIGTPYRYNTSAGIWEGGPSKDSLY) the chain is Extracellular. An N-linked (GlcNAc...) asparagine glycan is attached at asparagine 403. Positions 420–440 (VSSLYFTMTSLTTIGFGNIAP) form an intramembrane region, pore-forming. A Selectivity filter motif is present at residues 432 to 437 (TIGFGN). The Extracellular portion of the chain corresponds to 441-446 (TTDVEK). The chain crosses the membrane as a helical span at residues 447 to 467 (MFSVAMMMVGSLLYATIFGNV). Residues 468–988 (TTIFQQMYAN…PESDKDEIHF (521 aa)) are Cytoplasmic-facing. 550 to 667 (AFRLASDGCL…NSFSRNLTLT (118 aa)) is a binding site for a nucleoside 3',5'-cyclic phosphate. Positions 704 to 715 (HPVRKLFQKFKQ) are calmodulin-binding. Residues 717–742 (KELRNQGSTQGDPERNQLQVESRSLQ) form a disordered region. A compositionally biased stretch (polar residues) spans 721-742 (NQGSTQGDPERNQLQVESRSLQ). Lysine 785 participates in a covalent cross-link: Glycyl lysine isopeptide (Lys-Gly) (interchain with G-Cter in ubiquitin). Residues 838–890 (GLLSEDPKSSDSENSVTKNPLRKTDSCDSGITKSDLRLDKAGEARSPLEHSPI) are disordered. The segment covering 871–885 (SDLRLDKAGEARSPL) has biased composition (basic and acidic residues). At serine 883 the chain carries Phosphoserine. The tract at residues 909 to 948 (TLQEVKHELKEDIQLLSCRMTALEKQVAEILKILSEKSVP) is CAD (involved in subunit assembly). The tract at residues 969-988 (DIFSVSRPESPESDKDEIHF) is disordered. Over residues 977–988 (ESPESDKDEIHF) the composition is skewed to basic and acidic residues.

The protein belongs to the potassium channel family. H (Eag) (TC 1.A.1.20) subfamily. Kv10.2/KCNH5 sub-subfamily. Homotetramer. The potassium channel is probably composed of a homo- or heterotetrameric complex of pore-forming alpha subunits that can associate with modulating beta subunits. Heteromultimer with KCNH1/EAG. As to expression, detected in brain, skeletal muscle, heart, placenta, lung and liver, and at low levels in kidney.

It is found in the membrane. It carries out the reaction K(+)(in) = K(+)(out). Its function is as follows. Pore-forming (alpha) subunit of a voltage-gated delayed rectifier potassium channel that mediates outward-rectifying potassium currents which, on depolarization, reaches a steady-state level and do not inactivate. The kinetic is characterized by a slow activation time course and a small voltage dependence of the activation time constants, therefore, starts to open at more negative voltages. The activation kinetics depend on the prepulse potential and external divalent cation concentration. The time course of activation is biphasic with a fast and a slowly activating current component. With negative prepulses, the current activation is delayed and slowed down several fold, whereas more positive prepulses speed up activation, therefore the activation rate depends on holding potential. This Homo sapiens (Human) protein is Voltage-gated delayed rectifier potassium channel KCNH5.